A 428-amino-acid chain; its full sequence is 3-phosphoshikimate 1-carboxyvinyltransferase (428 aa).

Residues Lys-22, Ser-23, and Arg-27 each contribute to the 3-phosphoshikimate site. Lys-22 contributes to the phosphoenolpyruvate binding site. Phosphoenolpyruvate-binding residues include Gly-94 and Arg-122. Residues Ser-168, Ser-169, Gln-170, Ser-196, Asp-315, and Lys-342 each coordinate 3-phosphoshikimate. Gln-170 is a phosphoenolpyruvate binding site. The Proton acceptor role is filled by Asp-315. Arg-346, Arg-389, and Lys-414 together coordinate phosphoenolpyruvate.

It belongs to the EPSP synthase family. As to quaternary structure, monomer.

The protein localises to the cytoplasm. It catalyses the reaction 3-phosphoshikimate + phosphoenolpyruvate = 5-O-(1-carboxyvinyl)-3-phosphoshikimate + phosphate. Its pathway is metabolic intermediate biosynthesis; chorismate biosynthesis; chorismate from D-erythrose 4-phosphate and phosphoenolpyruvate: step 6/7. In terms of biological role, catalyzes the transfer of the enolpyruvyl moiety of phosphoenolpyruvate (PEP) to the 5-hydroxyl of shikimate-3-phosphate (S3P) to produce enolpyruvyl shikimate-3-phosphate and inorganic phosphate. This Thiobacillus denitrificans (strain ATCC 25259 / T1) protein is 3-phosphoshikimate 1-carboxyvinyltransferase.